The chain runs to 173 residues: Dual-action ribosomal maturation protein DarP (173 aa).

It belongs to the DarP family.

The protein resides in the cytoplasm. Member of a network of 50S ribosomal subunit biogenesis factors which assembles along the 30S-50S interface, preventing incorrect 23S rRNA structures from forming. Promotes peptidyl transferase center (PTC) maturation. The sequence is that of Dual-action ribosomal maturation protein DarP from Pseudomonas entomophila (strain L48).